Consider the following 213-residue polypeptide: ATP synthase peripheral stalk subunit OSCP, mitochondrial (213 aa).

A mitochondrion-targeting transit peptide spans 1 to 23 (MAAPATSVLSRQVRSFSTSVVRP). Positions 5–23 (ATSVLSRQVRSFSTSVVRP) match the SIFI-degron motif. 3 positions are modified to N6-acetyllysine: K60, K70, and K73. Position 90 is an N6-succinyllysine (K90). N6-acetyllysine; alternate is present on residues K100 and K158. N6-succinyllysine; alternate occurs at positions 100 and 158. 2 positions are modified to N6-acetyllysine: K176 and K192. N6-succinyllysine is present on K199.

This sequence belongs to the ATPase delta chain family. As to quaternary structure, component of the ATP synthase complex composed at least of ATP5F1A/subunit alpha, ATP5F1B/subunit beta, ATP5MC1/subunit c (homooctomer), MT-ATP6/subunit a, MT-ATP8/subunit 8, ATP5ME/subunit e, ATP5MF/subunit f, ATP5MG/subunit g, ATP5MK/subunit k, ATP5MJ/subunit j, ATP5F1C/subunit gamma, ATP5F1D/subunit delta, ATP5F1E/subunit epsilon, ATP5PF/subunit F6, ATP5PB/subunit b, ATP5PD/subunit d, ATP5PO/subunit OSCP. ATP synthase complex consists of a soluble F(1) head domain (subunits alpha(3) and beta(3)) - the catalytic core - and a membrane F(0) domain - the membrane proton channel (subunits c, a, 8, e, f, g, k and j). These two domains are linked by a central stalk (subunits gamma, delta, and epsilon) rotating inside the F1 region and a stationary peripheral stalk (subunits F6, b, d, and OSCP). Post-translationally, in response to mitochondrial stress, the precursor protein is ubiquitinated by the SIFI complex in the cytoplasm before mitochondrial import, leading to its degradation. Within the SIFI complex, UBR4 initiates ubiquitin chain that are further elongated or branched by KCMF1. Expressed by the principal cells of the epididymis. Detected in flagella of epididymal sperm (at protein level).

It localises to the mitochondrion. The protein resides in the mitochondrion inner membrane. Subunit OSCP, of the mitochondrial membrane ATP synthase complex (F(1)F(0) ATP synthase or Complex V) that produces ATP from ADP in the presence of a proton gradient across the membrane which is generated by electron transport complexes of the respiratory chain. ATP synthase complex consist of a soluble F(1) head domain - the catalytic core - and a membrane F(1) domain - the membrane proton channel. These two domains are linked by a central stalk rotating inside the F(1) region and a stationary peripheral stalk. During catalysis, ATP synthesis in the catalytic domain of F(1) is coupled via a rotary mechanism of the central stalk subunits to proton translocation. In vivo, can only synthesize ATP although its ATP hydrolase activity can be activated artificially in vitro. Part of the complex F(0) domain. Part of the complex F(0) domain and the peripheric stalk, which acts as a stator to hold the catalytic alpha(3)beta(3) subcomplex and subunit a/ATP6 static relative to the rotary elements. The protein is ATP synthase peripheral stalk subunit OSCP, mitochondrial of Rattus norvegicus (Rat).